A 54-amino-acid polypeptide reads, in one-letter code: Large ribosomal subunit protein bL33 (54 aa).

The protein belongs to the bacterial ribosomal protein bL33 family.

This Parafrankia sp. (strain EAN1pec) protein is Large ribosomal subunit protein bL33.